We begin with the raw amino-acid sequence, 288 residues long: MPELPEVEVVRRGLEEHLVGRRFTDVQVCHPRAVRSGEPEVLVSSLRDATVTAVKRRGKFLWLDFGEDFLLQVHLGMSGQMLVAEPGQVQSPHVRIRAGLSDGRELCFVDQRTFGEWRLEKAVPDPWAAGAGVASPKNFLPQNVSHIAADPLEAVFDAQAAVARMKSKRAAVKTVLLNQEVVSGIGNIYADEALFLAGVRPRRSAALLSRPTLHRVLQSAAEVMECALEQGGTSFDSLYVNVNGASGYFSRSLNVYGRGGEPCKRCGAPIKRVVVGGRSTHYCATCQR.

The active-site Schiff-base intermediate with DNA is P2. E3 functions as the Proton donor in the catalytic mechanism. The Proton donor; for beta-elimination activity role is filled by K59. Residues H93, R112, and K168 each contribute to the DNA site. Residues 254-288 (NVYGRGGEPCKRCGAPIKRVVVGGRSTHYCATCQR) form an FPG-type zinc finger. R278 functions as the Proton donor; for delta-elimination activity in the catalytic mechanism.

The protein belongs to the FPG family. Monomer. Zn(2+) is required as a cofactor.

The enzyme catalyses Hydrolysis of DNA containing ring-opened 7-methylguanine residues, releasing 2,6-diamino-4-hydroxy-5-(N-methyl)formamidopyrimidine.. It carries out the reaction 2'-deoxyribonucleotide-(2'-deoxyribose 5'-phosphate)-2'-deoxyribonucleotide-DNA = a 3'-end 2'-deoxyribonucleotide-(2,3-dehydro-2,3-deoxyribose 5'-phosphate)-DNA + a 5'-end 5'-phospho-2'-deoxyribonucleoside-DNA + H(+). Involved in base excision repair of DNA damaged by oxidation or by mutagenic agents. Acts as a DNA glycosylase that recognizes and removes damaged bases. Has a preference for oxidized purines, such as 7,8-dihydro-8-oxoguanine (8-oxoG). Has AP (apurinic/apyrimidinic) lyase activity and introduces nicks in the DNA strand. Cleaves the DNA backbone by beta-delta elimination to generate a single-strand break at the site of the removed base with both 3'- and 5'-phosphates. In Corynebacterium jeikeium (strain K411), this protein is Formamidopyrimidine-DNA glycosylase.